A 422-amino-acid chain; its full sequence is MLRVRCLRGGSRGAEAVHYIGSMLRKSFVGWVQRSFQSTQAAAVSEKPCAADEKVRDTAAQECPVCSYNEWDPLEEVIVGRPENANVPPFSVEVKANTYEKYWPFYQKHGGQSFPVDHVKKAIEEIEEMCKVLKHEGVIVQRPEVIDWSVKYKTPDFESTGMYAAMPRDILLVVGNEIIEAPMAWRARFFEYRAYRPLIKDYFRRGAKWTTAPKPTMADELYDQDYPIRTVEDRHKLAAMGKFVTTEFEPCFDAADFMRAGRDIFAQRSQVTNYLGIEWMRRHLAPDYKVHIISFKDPNPMHIDATFNIIGPGLVLSNPDRPCHQIELFKKAGWTVVTPPTPLIPDNHPLWMSSKWLSMNVLMLDEKRVMVDANETSIHKMFEKLGISTIKVNIRHANSLGGGFHCWTCDIRRRGTLQSYFR.

A mitochondrion-targeting transit peptide spans 1 to 37 (MLRVRCLRGGSRGAEAVHYIGSMLRKSFVGWVQRSFQ). Active-site residues include Asp253 and His302. Cys406 functions as the Amidino-cysteine intermediate in the catalytic mechanism.

The protein belongs to the amidinotransferase family. Homodimer. Ubiquitously expressed in adult tissues, with highest levels in muscle and intermediate levels in eye, heart, liver, stomach and testis. In stage 28 embryos, expression is higher in the dorsal and ventral parts of the trunk than in the head. In middle gastrulae, expression is highest around the yolk plug, while in stage 15 and tailbud stage embryos, expression is largely restricted to the region around the presumptive notochord and gut.

It is found in the mitochondrion inner membrane. It catalyses the reaction L-arginine + glycine = guanidinoacetate + L-ornithine. The protein operates within amine and polyamine biosynthesis; creatine biosynthesis; creatine from L-arginine and glycine: step 1/2. In terms of biological role, catalyzes the biosynthesis of guanidinoacetate, the immediate precursor of creatine. Creatine plays a vital role in energy metabolism in muscle tissues. May play a role in embryonic and central nervous system development. The protein is Glycine amidinotransferase, mitochondrial of Xenopus laevis (African clawed frog).